The primary structure comprises 459 residues: MKEFDTIAAIATNLGESGVSIIRVSGDKALSIVSSIFTGKNDRKLDDIRTYSMRYGFIIDKDTKEKLDEVIVSYMKGPRSFTAEDVVEINCHGGVVVTKRILEEVVAAGARLASPGEFTKRAFLNGRIDLSQAEAVIDLINAKTELSAKSALEQSEGKLSREIGKIRNKLLEIIASIEATVDYPEDDLEEVTSEKGRESVSKLLDEIDSLLDHADEGKILREGLNTVIVGKPNVGKSSLLNALLMETRAIVTDVPGTTRDVIEEYMSIDGIPIKIIDTAGIRDTDDVVEKIGVEKSREKINNSDLTVLVLDNSRGLDDEDKEIINFIKDKKYIVLLNKMDLESKIDKEALKELNSKYIIEISAKTGSGLDKFKEVIKELFFSGKVASKDVMITNTRHKEALIRAKESLEASKNALDNTFAIDLASIDLRNAWKSLGEINGDTVEEDIIDKIFSKFCLGK.

Arg-23, Glu-88, and Arg-127 together coordinate (6S)-5-formyl-5,6,7,8-tetrahydrofolate. Residues 223–381 (GLNTVIVGKP…FKEVIKELFF (159 aa)) enclose the TrmE-type G domain. Asn-233 lines the K(+) pocket. GTP-binding positions include 233-238 (NVGKSS), 252-258 (TDVPGTT), and 277-280 (DTAG). Position 237 (Ser-237) interacts with Mg(2+). K(+)-binding residues include Thr-252, Val-254, and Thr-257. Residue Thr-258 participates in Mg(2+) binding. Residue Lys-459 participates in (6S)-5-formyl-5,6,7,8-tetrahydrofolate binding.

Belongs to the TRAFAC class TrmE-Era-EngA-EngB-Septin-like GTPase superfamily. TrmE GTPase family. In terms of assembly, homodimer. Heterotetramer of two MnmE and two MnmG subunits. It depends on K(+) as a cofactor.

It is found in the cytoplasm. In terms of biological role, exhibits a very high intrinsic GTPase hydrolysis rate. Involved in the addition of a carboxymethylaminomethyl (cmnm) group at the wobble position (U34) of certain tRNAs, forming tRNA-cmnm(5)s(2)U34. This Clostridium novyi (strain NT) protein is tRNA modification GTPase MnmE.